The following is a 423-amino-acid chain: Enolase (423 aa).

Gln164 contributes to the (2R)-2-phosphoglycerate binding site. Glu206 (proton donor) is an active-site residue. Mg(2+) contacts are provided by Asp243, Glu289, and Asp316. (2R)-2-phosphoglycerate contacts are provided by Lys341, Arg370, Ser371, and Lys392. Catalysis depends on Lys341, which acts as the Proton acceptor.

This sequence belongs to the enolase family. Requires Mg(2+) as cofactor.

It localises to the cytoplasm. The protein localises to the secreted. The protein resides in the cell surface. The enzyme catalyses (2R)-2-phosphoglycerate = phosphoenolpyruvate + H2O. The protein operates within carbohydrate degradation; glycolysis; pyruvate from D-glyceraldehyde 3-phosphate: step 4/5. Functionally, catalyzes the reversible conversion of 2-phosphoglycerate (2-PG) into phosphoenolpyruvate (PEP). It is essential for the degradation of carbohydrates via glycolysis. The protein is Enolase of Desulfotalea psychrophila (strain LSv54 / DSM 12343).